A 518-amino-acid chain; its full sequence is Cytokinin hydroxylase (518 aa).

The chain crosses the membrane as a helical span at residues 1–21 (MLLTILKSLLVIFVTTILRVL). Heme is bound at residue Cys464.

The protein belongs to the cytochrome P450 family. Heme serves as cofactor. In terms of tissue distribution, expressed in roots and flowers.

It localises to the membrane. The enzyme catalyses N(6)-(dimethylallyl)adenosine 5'-phosphate + NADPH + O2 + H(+) = 9-ribosyl-trans-zeatin 5'-phosphate + NADP(+) + H2O. The catalysed reaction is N(6)-(dimethylallyl)adenosine 5'-diphosphate + NADPH + O2 + H(+) = 9-ribosyl-trans-zeatin 5'-diphosphate + NADP(+) + H2O. It carries out the reaction N(6)-(dimethylallyl)adenosine 5'-triphosphate + NADPH + O2 + H(+) = 9-ribosyl-trans-zeatin 5'-triphosphate + NADP(+) + H2O. Cytokinin hydroxylase that catalyzes the biosynthesis of trans-zeatin via the isopentenyladenine riboside 5'-monophosphate (iPRMP)-dependent pathway. Can use isopentenyladenosine-5'-monophosphate, isopentenyladenosine-5'-diphosphate and isopentenyladenosine-5'-triphosphate as substrate. This Arabidopsis thaliana (Mouse-ear cress) protein is Cytokinin hydroxylase (CYP735A1).